The sequence spans 355 residues: Aromatic amino acid aminotransferase (355 aa).

Residue Lys-217 is modified to N6-(pyridoxal phosphate)lysine.

The protein belongs to the class-II pyridoxal-phosphate-dependent aminotransferase family. As to quaternary structure, homodimer. Requires pyridoxal 5'-phosphate as cofactor.

It carries out the reaction an aromatic L-alpha-amino acid + 2-oxoglutarate = an aromatic oxo-acid + L-glutamate. In terms of biological role, aminotransferase that catalyzes the conversion of aromatic amino acids and 2-oxoglutarate into corresponding aromatic oxo acids and L-glutamate. The polypeptide is Aromatic amino acid aminotransferase (Mycolicibacterium paratuberculosis (strain ATCC BAA-968 / K-10) (Mycobacterium paratuberculosis)).